A 125-amino-acid polypeptide reads, in one-letter code: Phosphoribosyl-AMP cyclohydrolase (125 aa).

Aspartate 74 serves as a coordination point for Mg(2+). Cysteine 75 is a binding site for Zn(2+). 2 residues coordinate Mg(2+): aspartate 76 and aspartate 78. Cysteine 92 and cysteine 99 together coordinate Zn(2+).

Belongs to the PRA-CH family. In terms of assembly, homodimer. Mg(2+) serves as cofactor. The cofactor is Zn(2+).

The protein localises to the cytoplasm. It catalyses the reaction 1-(5-phospho-beta-D-ribosyl)-5'-AMP + H2O = 1-(5-phospho-beta-D-ribosyl)-5-[(5-phospho-beta-D-ribosylamino)methylideneamino]imidazole-4-carboxamide. It functions in the pathway amino-acid biosynthesis; L-histidine biosynthesis; L-histidine from 5-phospho-alpha-D-ribose 1-diphosphate: step 3/9. Catalyzes the hydrolysis of the adenine ring of phosphoribosyl-AMP. The polypeptide is Phosphoribosyl-AMP cyclohydrolase (Geobacter metallireducens (strain ATCC 53774 / DSM 7210 / GS-15)).